We begin with the raw amino-acid sequence, 310 residues long: Phosphoribosylaminoimidazole-succinocarboxamide synthase (310 aa).

This sequence belongs to the SAICAR synthetase family.

The catalysed reaction is 5-amino-1-(5-phospho-D-ribosyl)imidazole-4-carboxylate + L-aspartate + ATP = (2S)-2-[5-amino-1-(5-phospho-beta-D-ribosyl)imidazole-4-carboxamido]succinate + ADP + phosphate + 2 H(+). It participates in purine metabolism; IMP biosynthesis via de novo pathway; 5-amino-1-(5-phospho-D-ribosyl)imidazole-4-carboxamide from 5-amino-1-(5-phospho-D-ribosyl)imidazole-4-carboxylate: step 1/2. This is Phosphoribosylaminoimidazole-succinocarboxamide synthase from Xanthomonas axonopodis pv. citri (strain 306).